The sequence spans 181 residues: Large ribosomal subunit protein uL10 (181 aa).

This sequence belongs to the universal ribosomal protein uL10 family. Part of the ribosomal stalk of the 50S ribosomal subunit. The N-terminus interacts with L11 and the large rRNA to form the base of the stalk. The C-terminus forms an elongated spine to which L12 dimers bind in a sequential fashion forming a multimeric L10(L12)X complex.

Forms part of the ribosomal stalk, playing a central role in the interaction of the ribosome with GTP-bound translation factors. The protein is Large ribosomal subunit protein uL10 of Protochlamydia amoebophila (strain UWE25).